A 461-amino-acid polypeptide reads, in one-letter code: MAPVVISESEEDEDRVAITRRTKRQVHFDGEGDDRVDQQQQQHSSSHRDRDKHVQRKKKKRLSNRNLQGSNGGYAWEDEIKRSWDLVKVDDEGDMASLVASIVEARKKRTAKKNITPYQRGIIRSLILTLDCSEAMLEKDLRPNRHAMIIQYAIDFVHEFFDQNPISQMGIIIMRNGLAQLVSQVSGNPQDHIDALKSIRKQEPKGNPSLQNALEMARGLLLPVPAHCTREVLIVFGSLSTTDPGDIHQTIDSLVSEKIRVKVLGLSAQVAICKELCKATNYGDESFYKILLDETHLKELFNEAVTPLPVNKINKGFTLVKMGFPTRIFEDTPTFCSCHSKLVYGGYFCPNCHSKVCSLPTVCPCCDLMLILSTHLARSYHHLMPLKTFAEVPTTEKFRSEDCFSCQSRFPILKNHKNGKLLTSSRYRCEDCKQEFCVDCDVFIHEILHNCPGCESKPVIT.

The interval 1 to 70 (MAPVVISESE…RLSNRNLQGS (70 aa)) is disordered. The span at 26-37 (VHFDGEGDDRVD) shows a compositional bias: basic and acidic residues. Over residues 53–63 (HVQRKKKKRLS) the composition is skewed to basic residues. The VWFA domain occupies 125–304 (SLILTLDCSE…THLKELFNEA (180 aa)). A C4-type zinc finger spans residues 349 to 366 (CPNCHSKVCSLPTVCPCC).

This sequence belongs to the GTF2H2 family. As to quaternary structure, component of the 7-subunit TFIIH core complex composed of XPB/SSL2, XPD/RAD3, SSL1, TFB1, TFB2, TFB4 and TFB5, which is active in NER. The core complex associates with the 3-subunit CTD-kinase module TFIIK composed of CCL1, KIN28 and TFB3 to form the 10-subunit holoenzyme (holo-TFIIH) active in transcription. An additionnal subunit, TFB6, plays a role in the dissociation of the SSL2 helicase from TFIIH after transcription initiation.

The protein resides in the nucleus. Its function is as follows. Component of the general transcription and DNA repair factor IIH (TFIIH) core complex, which is involved in general and transcription-coupled nucleotide excision repair (NER) of damaged DNA and, when complexed to TFIIK, in RNA transcription by RNA polymerase II. In NER, TFIIH acts by opening DNA around the lesion to allow the excision of the damaged oligonucleotide and its replacement by a new DNA fragment. In transcription, TFIIH has an essential role in transcription initiation. When the pre-initiation complex (PIC) has been established, TFIIH is required for promoter opening and promoter escape. Phosphorylation of the C-terminal tail (CTD) of the largest subunit of RNA polymerase II by the kinase module TFIIK controls the initiation of transcription. The polypeptide is General transcription and DNA repair factor IIH subunit SSL1 (SSL1) (Saccharomyces cerevisiae (strain ATCC 204508 / S288c) (Baker's yeast)).